A 541-amino-acid chain; its full sequence is Probable inorganic phosphate transporter 1-12 (541 aa).

Residues 1-26 lie on the Cytoplasmic side of the membrane; the sequence is MGRQDQQLQVLNALDAAKTQWYHFTA. Residues 27–47 form a helical membrane-spanning segment; it reads IIVAGMGFFTDAYDLFCISLV. Residues 48 to 70 are Extracellular-facing; it reads TKLLGRIYYTDPASPTPGSLPPN. A helical transmembrane segment spans residues 71-91; the sequence is IAAAVNGVALCGTLSGQLFFG. Over 92–100 the chain is Cytoplasmic; the sequence is WLGDKLGRK. The helical transmembrane segment at 101-121 threads the bilayer; the sequence is SVYGMTLLLMVICSIASGLSF. Residues 122-124 lie on the Extracellular side of the membrane; it reads SHT. A helical transmembrane segment spans residues 125–145; the sequence is PTSVMATLCFFRFWLGFGIGG. Topologically, residues 146–163 are cytoplasmic; that stretch reads DYPLSATIMSEYANKKTR. A helical membrane pass occupies residues 164 to 184; the sequence is GAFIAAVFAMQGFGILAGGVV. Topologically, residues 185-213 are extracellular; it reads TLAMSAGFQAAFPAPAYEVNAAASTVPQA. A helical transmembrane segment spans residues 214-234; that stretch reads DYVWRIILMLGALPAILTYYW. Topologically, residues 235–297 are cytoplasmic; that stretch reads RMKMPETARY…ARFAKRHGAH (63 aa). The helical transmembrane segment at 298–318 threads the bilayer; that stretch reads LLGTAATWFLVDVAYYSQNLF. Residues 319-349 lie on the Extracellular side of the membrane; it reads QKDIFTSIHWIPKARTMSELEEVFRISRAQT. Residues 350–370 form a helical membrane-spanning segment; sequence LIALCGTVPGYWFTVFLIDII. Residues 371–374 are Cytoplasmic-facing; sequence GRFK. Residues 375–395 form a helical membrane-spanning segment; that stretch reads IQLLGFAGMTAFMLGLAIPYH. At 396-403 the chain is on the extracellular side; it reads HWTMPGNQ. A helical membrane pass occupies residues 404–424; sequence VIFVFLYGFTFFFANFGPNAT. Residues 425-443 lie on the Cytoplasmic side of the membrane; sequence TFIVPAEIFPARLRSTCHG. The helical transmembrane segment at 444–464 threads the bilayer; it reads ISAASGKAGAIIGAFGFLYAA. The Extracellular portion of the chain corresponds to 465-484; it reads QPQDKAHVDAGYKPGIGVRN. Residues 485–505 traverse the membrane as a helical segment; the sequence is ALFVLAGCNLVGFLMTWMLVP. The Cytoplasmic portion of the chain corresponds to 506 to 541; the sequence is ESKGKSLEEMSGEADDEEASANGGATAVNSSGVEMV. Positions 512-541 are disordered; that stretch reads LEEMSGEADDEEASANGGATAVNSSGVEMV. Positions 515-524 are enriched in acidic residues; the sequence is MSGEADDEEA. The span at 532–541 shows a compositional bias: polar residues; that stretch reads AVNSSGVEMV.

The protein belongs to the major facilitator superfamily. Phosphate:H(+) symporter (TC 2.A.1.9) family.

The protein resides in the membrane. Its function is as follows. High-affinity transporter for external inorganic phosphate. The protein is Probable inorganic phosphate transporter 1-12 (PHT1-12) of Oryza sativa subsp. japonica (Rice).